A 369-amino-acid chain; its full sequence is Anhydro-N-acetylmuramic acid kinase (369 aa).

11-18 contacts ATP; it reads GTSMDAVD.

It belongs to the anhydro-N-acetylmuramic acid kinase family.

The enzyme catalyses 1,6-anhydro-N-acetyl-beta-muramate + ATP + H2O = N-acetyl-D-muramate 6-phosphate + ADP + H(+). It participates in amino-sugar metabolism; 1,6-anhydro-N-acetylmuramate degradation. Its pathway is cell wall biogenesis; peptidoglycan recycling. In terms of biological role, catalyzes the specific phosphorylation of 1,6-anhydro-N-acetylmuramic acid (anhMurNAc) with the simultaneous cleavage of the 1,6-anhydro ring, generating MurNAc-6-P. Is required for the utilization of anhMurNAc either imported from the medium or derived from its own cell wall murein, and thus plays a role in cell wall recycling. In Idiomarina loihiensis (strain ATCC BAA-735 / DSM 15497 / L2-TR), this protein is Anhydro-N-acetylmuramic acid kinase.